Here is a 194-residue protein sequence, read N- to C-terminus: Pyridoxal 5'-phosphate synthase subunit PdxT (194 aa).

50–52 (GES) is a binding site for L-glutamine. Cys-82 (nucleophile) is an active-site residue. L-glutamine-binding positions include Arg-109 and 136–137 (IR). Active-site charge relay system residues include His-172 and Glu-174.

It belongs to the glutaminase PdxT/SNO family. In the presence of PdxS, forms a dodecamer of heterodimers. Only shows activity in the heterodimer.

The enzyme catalyses aldehydo-D-ribose 5-phosphate + D-glyceraldehyde 3-phosphate + L-glutamine = pyridoxal 5'-phosphate + L-glutamate + phosphate + 3 H2O + H(+). It carries out the reaction L-glutamine + H2O = L-glutamate + NH4(+). The protein operates within cofactor biosynthesis; pyridoxal 5'-phosphate biosynthesis. Its function is as follows. Catalyzes the hydrolysis of glutamine to glutamate and ammonia as part of the biosynthesis of pyridoxal 5'-phosphate. The resulting ammonia molecule is channeled to the active site of PdxS. The chain is Pyridoxal 5'-phosphate synthase subunit PdxT from Streptococcus pneumoniae (strain CGSP14).